The following is a 221-amino-acid chain: Toxin coregulated pilus biosynthesis protein P (221 aa).

Residues 5 to 109 constitute a DNA-binding region (ompR/PhoB-type); sequence RVIYQFPDNL…VKLQGYRINI (105 aa). The helical transmembrane segment at 143–163 threads the bilayer; it reads VVPYLVFSALYVALLPVIWWS.

It is found in the cell membrane. Its function is as follows. Involved in TCP pilus biogenesis. The chain is Toxin coregulated pilus biosynthesis protein P (tcpP) from Vibrio cholerae serotype O1 (strain ATCC 39315 / El Tor Inaba N16961).